We begin with the raw amino-acid sequence, 551 residues long: Small ribosomal subunit protein bS1 (551 aa).

S1 motif domains are found at residues 21–83, 101–167, 188–256, 273–343, 360–430, and 447–516; these read GALV…LSRE, GEMV…VSRR, GQEI…LGMK, NSRV…LGIK, DEKI…LGIK, and DAVI…VSHK.

This sequence belongs to the bacterial ribosomal protein bS1 family.

Its function is as follows. Binds mRNA; thus facilitating recognition of the initiation point. It is needed to translate mRNA with a short Shine-Dalgarno (SD) purine-rich sequence. The protein is Small ribosomal subunit protein bS1 (rpsA) of Coxiella burnetii (strain RSA 493 / Nine Mile phase I).